Reading from the N-terminus, the 231-residue chain is Large ribosomal subunit protein uL1 (231 aa).

It belongs to the universal ribosomal protein uL1 family. As to quaternary structure, part of the 50S ribosomal subunit.

Binds directly to 23S rRNA. The L1 stalk is quite mobile in the ribosome, and is involved in E site tRNA release. In terms of biological role, protein L1 is also a translational repressor protein, it controls the translation of the L11 operon by binding to its mRNA. The chain is Large ribosomal subunit protein uL1 from Saccharophagus degradans (strain 2-40 / ATCC 43961 / DSM 17024).